The sequence spans 353 residues: Thiamine thiazole synthase 1, chloroplastic (353 aa).

The transit peptide at 1–48 directs the protein to the chloroplast; sequence MATLTSSICSKPKASVFDPHKSSFHGVPIATQARLSPVKSTPVNLAVT. Substrate contacts are provided by residues A97, 117–118, G125, and A190; that span reads EQ. Residue C219 is modified to 2,3-didehydroalanine (Cys). Residues D221, H236, M288, and 298-300 contribute to the substrate site; that span reads RMG.

Belongs to the THI4 family. In terms of assembly, homooctamer. Fe cation is required as a cofactor. During the catalytic reaction, a sulfide is transferred from Cys-219 to a reaction intermediate, generating a dehydroalanine residue.

The protein localises to the plastid. It localises to the chloroplast. The catalysed reaction is [ADP-thiazole synthase]-L-cysteine + glycine + NAD(+) = [ADP-thiazole synthase]-dehydroalanine + ADP-5-ethyl-4-methylthiazole-2-carboxylate + nicotinamide + 3 H2O + 2 H(+). In terms of biological role, involved in biosynthesis of the thiamine precursor thiazole. Catalyzes the conversion of NAD and glycine to adenosine diphosphate 5-(2-hydroxyethyl)-4-methylthiazole-2-carboxylic acid (ADT), an adenylated thiazole intermediate. The reaction includes an iron-dependent sulfide transfer from a conserved cysteine residue of the protein to a thiazole intermediate. The enzyme can only undergo a single turnover, which suggests it is a suicide enzyme. May have additional roles in adaptation to various stress conditions and in DNA damage tolerance. The protein is Thiamine thiazole synthase 1, chloroplastic of Vitis vinifera (Grape).